The sequence spans 443 residues: Phosphoglucosamine mutase (443 aa).

Residue Ser101 is the Phosphoserine intermediate of the active site. Residues Ser101, Asp239, Asp241, and Asp243 each coordinate Mg(2+). Phosphoserine is present on Ser101.

The protein belongs to the phosphohexose mutase family. The cofactor is Mg(2+). Post-translationally, activated by phosphorylation.

The catalysed reaction is alpha-D-glucosamine 1-phosphate = D-glucosamine 6-phosphate. In terms of biological role, catalyzes the conversion of glucosamine-6-phosphate to glucosamine-1-phosphate. The protein is Phosphoglucosamine mutase of Francisella tularensis subsp. tularensis (strain FSC 198).